The chain runs to 391 residues: UDP-galactose transporter homolog 1 (391 aa).

A run of 5 helical transmembrane segments spans residues 3 to 23, 52 to 72, 126 to 147, 178 to 198, and 207 to 227; these read LLQL…WGLL, LFLN…YLLV, YILI…LRYI, YKYA…AFAP, and APES…VLDG. N-linked (GlcNAc...) asparagine glycosylation occurs at N230. 4 consecutive transmembrane segments (helical) span residues 250-270, 298-318, 323-343, and 347-367; these read MMLV…TLPI, DIIA…ETLE, LTLV…SVVV, and ELSK…GIEA.

Belongs to the nucleotide-sugar transporter family. SLC35B subfamily.

The protein localises to the endoplasmic reticulum membrane. Its function is as follows. May be involved in specific transport of UDP-Gal from the cytosol to the Golgi lumen. Involved in the maintenance of optimal conditions for the folding of secretory pathway proteins in the endoplasmic reticulum. In Mycosarcoma maydis (Corn smut fungus), this protein is UDP-galactose transporter homolog 1 (HUT1).